Reading from the N-terminus, the 386-residue chain is Homoserine O-succinyltransferase (386 aa).

Positions 49–358 (NAILICHALS…DAEQGHDSFL (310 aa)) constitute an AB hydrolase-1 domain. Catalysis depends on Ser-156, which acts as the Nucleophile. Arg-226 is a substrate binding site. Residues Asp-321 and His-354 contribute to the active site. Residue Asp-355 coordinates substrate.

It belongs to the AB hydrolase superfamily. MetX family. In terms of assembly, homodimer.

It is found in the cytoplasm. The enzyme catalyses L-homoserine + succinyl-CoA = O-succinyl-L-homoserine + CoA. The protein operates within amino-acid biosynthesis; L-methionine biosynthesis via de novo pathway; O-succinyl-L-homoserine from L-homoserine: step 1/1. In terms of biological role, transfers a succinyl group from succinyl-CoA to L-homoserine, forming succinyl-L-homoserine. This chain is Homoserine O-succinyltransferase, found in Acinetobacter baumannii (strain SDF).